Reading from the N-terminus, the 145-residue chain is Holo-[acyl-carrier-protein] synthase (145 aa).

Residues Asp-8 and Glu-59 each coordinate Mg(2+).

It belongs to the P-Pant transferase superfamily. AcpS family. The cofactor is Mg(2+).

It localises to the cytoplasm. It catalyses the reaction apo-[ACP] + CoA = holo-[ACP] + adenosine 3',5'-bisphosphate + H(+). In terms of biological role, transfers the 4'-phosphopantetheine moiety from coenzyme A to a Ser of acyl-carrier-protein. In Granulibacter bethesdensis (strain ATCC BAA-1260 / CGDNIH1), this protein is Holo-[acyl-carrier-protein] synthase.